Here is a 216-residue protein sequence, read N- to C-terminus: Phosphoribosylformylglycinamidine synthase subunit PurQ (216 aa).

The 215-residue stretch at 2–216 folds into the Glutamine amidotransferase type-1 domain; that stretch reads SIGVIVFPGS…GRRMLEALLG (215 aa). Catalysis depends on C86, which acts as the Nucleophile. Catalysis depends on residues H193 and E195.

As to quaternary structure, part of the FGAM synthase complex composed of 1 PurL, 1 PurQ and 2 PurS subunits.

It is found in the cytoplasm. It catalyses the reaction N(2)-formyl-N(1)-(5-phospho-beta-D-ribosyl)glycinamide + L-glutamine + ATP + H2O = 2-formamido-N(1)-(5-O-phospho-beta-D-ribosyl)acetamidine + L-glutamate + ADP + phosphate + H(+). The catalysed reaction is L-glutamine + H2O = L-glutamate + NH4(+). The protein operates within purine metabolism; IMP biosynthesis via de novo pathway; 5-amino-1-(5-phospho-D-ribosyl)imidazole from N(2)-formyl-N(1)-(5-phospho-D-ribosyl)glycinamide: step 1/2. Part of the phosphoribosylformylglycinamidine synthase complex involved in the purines biosynthetic pathway. Catalyzes the ATP-dependent conversion of formylglycinamide ribonucleotide (FGAR) and glutamine to yield formylglycinamidine ribonucleotide (FGAM) and glutamate. The FGAM synthase complex is composed of three subunits. PurQ produces an ammonia molecule by converting glutamine to glutamate. PurL transfers the ammonia molecule to FGAR to form FGAM in an ATP-dependent manner. PurS interacts with PurQ and PurL and is thought to assist in the transfer of the ammonia molecule from PurQ to PurL. In Synechococcus sp. (strain CC9605), this protein is Phosphoribosylformylglycinamidine synthase subunit PurQ.